Here is a 64-residue protein sequence, read N- to C-terminus: PYLa/PGLa A (64 aa).

A signal peptide spans 1–20 (MYKQIFLCLIIAALCATIMA). A propeptide spanning residues 21 to 35 (EASAFADADEDDDKR) is cleaved from the precursor. At L59 the chain carries Leucine amide. The propeptide occupies 60–64 (GRRDS).

Belongs to the gastrin/cholecystokinin family. Magainin subfamily. Expressed by the skin glands. Synthesized in the stomach and stored in a novel granular multinucleated cell in the gastric mucosa. Stored as active, processed peptides in large granules within the granular gland secretions of the skin.

Its subcellular location is the secreted. In terms of biological role, PGLa and PGLa-H display a broad-spectrum of antibacterial activity against a range of Gram-positive and Gram-negative bacteria. PGLa also displays antifungal activity against C.albicans ATCC 14053. PGLa-H shows moderate antibacterial activity against the multidrug-resistant methicillin-resistant S.aureus (MRSA) but exhibits very little hemolytic activity. In Xenopus laevis (African clawed frog), this protein is PYLa/PGLa A (pgla-a).